The sequence spans 708 residues: Fatty acid oxidation complex subunit alpha (708 aa).

The enoyl-CoA hydratase stretch occupies residues 1–190 (MSQDKAFTME…KAGLVTEVVP (190 aa)). Residues 310 to 708 (DSVKRVGVLG…MLENGWNFYQ (399 aa)) form a 3-hydroxyacyl-CoA dehydrogenase region.

This sequence in the N-terminal section; belongs to the enoyl-CoA hydratase/isomerase family. The protein in the central section; belongs to the 3-hydroxyacyl-CoA dehydrogenase family. Heterotetramer of two alpha chains (FadJ) and two beta chains (FadI).

The protein resides in the cytoplasm. The enzyme catalyses a (3S)-3-hydroxyacyl-CoA = a (2E)-enoyl-CoA + H2O. It catalyses the reaction a 4-saturated-(3S)-3-hydroxyacyl-CoA = a (3E)-enoyl-CoA + H2O. The catalysed reaction is a (3S)-3-hydroxyacyl-CoA + NAD(+) = a 3-oxoacyl-CoA + NADH + H(+). It carries out the reaction (3S)-3-hydroxybutanoyl-CoA = (3R)-3-hydroxybutanoyl-CoA. It participates in lipid metabolism; fatty acid beta-oxidation. Functionally, catalyzes the formation of a hydroxyacyl-CoA by addition of water on enoyl-CoA. Also exhibits 3-hydroxyacyl-CoA epimerase and 3-hydroxyacyl-CoA dehydrogenase activities. The protein is Fatty acid oxidation complex subunit alpha of Idiomarina loihiensis (strain ATCC BAA-735 / DSM 15497 / L2-TR).